The primary structure comprises 610 residues: Phosphoprotein 85 (610 aa).

Disordered stretches follow at residues 462 to 530 and 543 to 610; these read NEGR…NISD and EEPM…DARL. Over residues 467–478 the composition is skewed to low complexity; it reads SSRASPSHSTST. The segment covering 484 to 495 has biased composition (polar residues); it reads PQSDRSTPTSIL. Low complexity-rich tracts occupy residues 503–515 and 552–567; these read SNSR…FSQE and SPQS…RQSR. A compositionally biased stretch (polar residues) spans 581-592; it reads VPSSQTRRQNNA. Residues 600–610 show a composition bias toward basic and acidic residues; it reads RLTEMMNDARL.

The protein belongs to the herpesviridae pp85 family. In terms of processing, phosphorylated.

It is found in the virion tegument. The protein localises to the host cytoplasm. The polypeptide is Phosphoprotein 85 (U14) (Homo sapiens (Human)).